The primary structure comprises 492 residues: Probable cytochrome P450 513A3 (492 aa).

Residues 1-21 (MTSLTLYLIIFSIILYLFVNR) traverse the membrane as a helical segment. C437 contacts heme.

The protein belongs to the cytochrome P450 family. Heme serves as cofactor.

It localises to the membrane. The sequence is that of Probable cytochrome P450 513A3 (cyp513A3) from Dictyostelium discoideum (Social amoeba).